A 646-amino-acid polypeptide reads, in one-letter code: Threonine--tRNA ligase (646 aa).

The TGS domain occupies methionine 1–lysine 61. Residues aspartate 242 to proline 541 are catalytic. Zn(2+) is bound by residues cysteine 337, histidine 388, and histidine 518.

The protein belongs to the class-II aminoacyl-tRNA synthetase family. As to quaternary structure, homodimer. It depends on Zn(2+) as a cofactor.

Its subcellular location is the cytoplasm. It carries out the reaction tRNA(Thr) + L-threonine + ATP = L-threonyl-tRNA(Thr) + AMP + diphosphate + H(+). Functionally, catalyzes the attachment of threonine to tRNA(Thr) in a two-step reaction: L-threonine is first activated by ATP to form Thr-AMP and then transferred to the acceptor end of tRNA(Thr). Also edits incorrectly charged L-seryl-tRNA(Thr). The protein is Threonine--tRNA ligase of Bacteroides thetaiotaomicron (strain ATCC 29148 / DSM 2079 / JCM 5827 / CCUG 10774 / NCTC 10582 / VPI-5482 / E50).